We begin with the raw amino-acid sequence, 544 residues long: Chaperonin GroEL (544 aa).

Residues 29-32 (TLGP), 86-90 (DGTTT), glycine 413, 476-478 (NAA), and aspartate 492 each bind ATP.

It belongs to the chaperonin (HSP60) family. As to quaternary structure, forms a cylinder of 14 subunits composed of two heptameric rings stacked back-to-back. Interacts with the co-chaperonin GroES.

It localises to the cytoplasm. The catalysed reaction is ATP + H2O + a folded polypeptide = ADP + phosphate + an unfolded polypeptide.. In terms of biological role, together with its co-chaperonin GroES, plays an essential role in assisting protein folding. The GroEL-GroES system forms a nano-cage that allows encapsulation of the non-native substrate proteins and provides a physical environment optimized to promote and accelerate protein folding. The chain is Chaperonin GroEL from Bacillus pumilus (strain SAFR-032).